The primary structure comprises 237 residues: tRNA (guanine-N(7)-)-methyltransferase (237 aa).

Positions 56, 81, 108, and 131 each coordinate S-adenosyl-L-methionine. Asp131 is a catalytic residue. Residues Lys135, Asp167, and Thr204–Glu207 contribute to the substrate site.

The protein belongs to the class I-like SAM-binding methyltransferase superfamily. TrmB family.

The enzyme catalyses guanosine(46) in tRNA + S-adenosyl-L-methionine = N(7)-methylguanosine(46) in tRNA + S-adenosyl-L-homocysteine. It participates in tRNA modification; N(7)-methylguanine-tRNA biosynthesis. Functionally, catalyzes the formation of N(7)-methylguanine at position 46 (m7G46) in tRNA. The sequence is that of tRNA (guanine-N(7)-)-methyltransferase from Legionella pneumophila (strain Paris).